A 559-amino-acid polypeptide reads, in one-letter code: Laccase-7 (559 aa).

The N-terminal stretch at 1–28 is a signal peptide; that stretch reads MVIPWCSSMMRLLWFLFALLLARSVADA. N-linked (GlcNAc...) asparagine glycans are attached at residues asparagine 32, asparagine 47, and asparagine 82. Plastocyanin-like domains are found at residues 36 to 152 and 163 to 316; these read TVES…PRNG and EVPI…YNTT. Residues histidine 86 and histidine 88 each coordinate Cu cation. N-linked (GlcNAc...) asparagine glycans are attached at residues asparagine 112 and asparagine 120. Cu cation contacts are provided by histidine 131 and histidine 133. N-linked (GlcNAc...) asparagine glycans are attached at residues asparagine 151, asparagine 210, asparagine 220, asparagine 257, asparagine 278, asparagine 314, asparagine 363, and asparagine 443. One can recognise a Plastocyanin-like 3 domain in the interval 396–543; it reads FRLPSQMSLL…GMVFAVDNGT (148 aa). Cu cation-binding residues include histidine 461, histidine 464, and histidine 466. Asparagine 484 carries an N-linked (GlcNAc...) asparagine glycan. Residues histidine 522, cysteine 523, histidine 524, and histidine 528 each coordinate Cu cation. The N-linked (GlcNAc...) asparagine glycan is linked to asparagine 541.

It belongs to the multicopper oxidase family. Cu cation serves as cofactor.

It localises to the secreted. Its subcellular location is the extracellular space. The protein localises to the apoplast. It catalyses the reaction 4 hydroquinone + O2 = 4 benzosemiquinone + 2 H2O. In terms of biological role, lignin degradation and detoxification of lignin-derived products. This chain is Laccase-7 (LAC7), found in Oryza sativa subsp. japonica (Rice).